A 128-amino-acid polypeptide reads, in one-letter code: Large ribosomal subunit protein bL17 (128 aa).

This sequence belongs to the bacterial ribosomal protein bL17 family. Part of the 50S ribosomal subunit. Contacts protein L32.

This Pseudomonas fluorescens (strain Pf0-1) protein is Large ribosomal subunit protein bL17.